Consider the following 195-residue polypeptide: ATP-dependent Clp protease proteolytic subunit 1 (195 aa).

The active-site Nucleophile is the Ser96. His121 is an active-site residue.

This sequence belongs to the peptidase S14 family. Fourteen ClpP subunits assemble into 2 heptameric rings which stack back to back to give a disk-like structure with a central cavity, resembling the structure of eukaryotic proteasomes.

The protein localises to the cytoplasm. It carries out the reaction Hydrolysis of proteins to small peptides in the presence of ATP and magnesium. alpha-casein is the usual test substrate. In the absence of ATP, only oligopeptides shorter than five residues are hydrolyzed (such as succinyl-Leu-Tyr-|-NHMec, and Leu-Tyr-Leu-|-Tyr-Trp, in which cleavage of the -Tyr-|-Leu- and -Tyr-|-Trp bonds also occurs).. Functionally, cleaves peptides in various proteins in a process that requires ATP hydrolysis. Has a chymotrypsin-like activity. Plays a major role in the degradation of misfolded proteins. The chain is ATP-dependent Clp protease proteolytic subunit 1 from Prochlorococcus marinus (strain MIT 9312).